The primary structure comprises 471 residues: Indole-3-acetate beta-glucosyltransferase (471 aa).

The active-site Proton acceptor is the His15. His15 is an an anthocyanidin binding site. The active-site Charge relay is Asp107. Positions 129, 344, 359, 362, 363, 364, 367, 383, and 384 each coordinate UDP-alpha-D-glucose.

The protein belongs to the UDP-glycosyltransferase family.

It catalyses the reaction (indol-3-yl)acetate + UDP-alpha-D-glucose = 1-O-(indol-3-ylacetyl)-beta-D-glucose + UDP. It participates in plant hormone metabolism; auxin conjugation. The protein is Indole-3-acetate beta-glucosyltransferase (IAGLU) of Zea mays (Maize).